A 218-amino-acid chain; its full sequence is Pyridoxine/pyridoxamine 5'-phosphate oxidase (218 aa).

Substrate contacts are provided by residues 14–17 and lysine 72; that span reads RREY. Residues 67 to 72, 82 to 83, arginine 88, lysine 89, and glutamine 111 each bind FMN; these read RIVLLK and YT. Positions 129, 133, and 137 each coordinate substrate. FMN is bound by residues 146–147 and tryptophan 191; that span reads QS. 197 to 199 is a substrate binding site; the sequence is RLH. Arginine 201 serves as a coordination point for FMN.

Belongs to the pyridoxamine 5'-phosphate oxidase family. Homodimer. It depends on FMN as a cofactor.

It carries out the reaction pyridoxamine 5'-phosphate + O2 + H2O = pyridoxal 5'-phosphate + H2O2 + NH4(+). The catalysed reaction is pyridoxine 5'-phosphate + O2 = pyridoxal 5'-phosphate + H2O2. It functions in the pathway cofactor metabolism; pyridoxal 5'-phosphate salvage; pyridoxal 5'-phosphate from pyridoxamine 5'-phosphate: step 1/1. The protein operates within cofactor metabolism; pyridoxal 5'-phosphate salvage; pyridoxal 5'-phosphate from pyridoxine 5'-phosphate: step 1/1. Its function is as follows. Catalyzes the oxidation of either pyridoxine 5'-phosphate (PNP) or pyridoxamine 5'-phosphate (PMP) into pyridoxal 5'-phosphate (PLP). This is Pyridoxine/pyridoxamine 5'-phosphate oxidase from Escherichia fergusonii (strain ATCC 35469 / DSM 13698 / CCUG 18766 / IAM 14443 / JCM 21226 / LMG 7866 / NBRC 102419 / NCTC 12128 / CDC 0568-73).